Consider the following 309-residue polypeptide: MEMYPRHRYSKHSVFKGFSDKVRKNDLDMNVVKELLSNGASLTIKDSSNKDPITVYFRRTIMNLEMIDERKYIVHSYLKNYKNFDYPFFRKLVLTNKHCLNNYYNISDSKYGTPLHILASNKKLITPNYMKLLVYNGNDINARGEDTQMRTPLHKYLCKFVYHNIEYGIRYYNEKIIDAFIELGADLTIPNDDGMIPVVYCIHSNAEYGYNNITNIKIIRKLLNLSRRASHNLFRDRVMHDYISNTYIDLECLDIIRSLDGFDINGYFEGRTPLHCAIQHNFTQIAKYLLDRGADIVVPNTLIIHQYIQ.

ANK repeat units lie at residues 13 to 44 (SVFK…SLTI), 110 to 142 (KYGT…DINA), 160 to 189 (FVYH…DLTI), 197 to 231 (PVVY…RASH), and 269 to 298 (EGRT…DIVV).

Belongs to the orthopoxviruses VACWR203 protein family.

In Bos taurus (Bovine), this protein is Ankyrin repeat protein VACWR203.